A 61-amino-acid polypeptide reads, in one-letter code: uncharacterized protein (61 aa).

Residues 10 to 27 (RILFFFFIFFTLFLFNIP) form a helical membrane-spanning segment.

It localises to the membrane. This is an uncharacterized protein from Dictyostelium discoideum (Social amoeba).